The primary structure comprises 202 residues: uncharacterized protein (202 aa).

The HTH tetR-type domain maps to 13 to 73; that stretch reads ELAADRILDA…AYVHRETRRL (61 aa). The H-T-H motif DNA-binding region spans 36 to 55; sequence GMNEIAKAAGCSRATLYRYF.

This is an uncharacterized protein from Mycobacterium tuberculosis (strain CDC 1551 / Oshkosh).